A 244-amino-acid polypeptide reads, in one-letter code: Ribonuclease P protein component 3 (244 aa).

This sequence belongs to the eukaryotic/archaeal RNase P protein component 3 family. In terms of assembly, consists of a catalytic RNA component and at least 4-5 protein subunits.

The protein localises to the cytoplasm. The catalysed reaction is Endonucleolytic cleavage of RNA, removing 5'-extranucleotides from tRNA precursor.. Its function is as follows. Part of ribonuclease P, a protein complex that generates mature tRNA molecules by cleaving their 5'-ends. The chain is Ribonuclease P protein component 3 from Methanopyrus kandleri (strain AV19 / DSM 6324 / JCM 9639 / NBRC 100938).